Reading from the N-terminus, the 457-residue chain is BAG family molecular chaperone regulator 4 (457 aa).

Low complexity predominate over residues 1-20 (MSALRRSGYGPSDGPSYGRY). The interval 1–104 (MSALRRSGYG…PYPGYNSNYW (104 aa)) is disordered. At S7 the chain carries Phosphoserine. The span at 31–48 (HVPPPLYPPLRPEPPQPP) shows a compositional bias: pro residues. R41, R54, R108, and R185 each carry omega-N-methylarginine. 2 disordered regions span residues 128 to 335 (LNSY…SDLL) and 348 to 374 (YGNA…SSDE). A compositionally biased stretch (polar residues) spans 160 to 193 (YTQSNYSTEVPNTYRSPGNSPTPMSRWMYSQQDC). Residues 255–268 (PWPSAAPSAPSAGS) show a composition bias toward low complexity. Positions 284-295 (PQPPPSPPPQQP) are enriched in pro residues. Polar residues-rich tracts occupy residues 326–335 (AVNNDNSDLL) and 348–365 (YGNA…SNNL). A BAG domain is found at 379 to 456 (SIKKIIHVLE…AILEKLEKKG (78 aa)).

In terms of assembly, binds to the ATPase domain of HSP/HSC70 chaperones. Binds to the death domain of TNFRSF12. Binds to the death domain of TNFRSF1A in the absence of TNF and thereby prevents binding of adapter molecules such as TRADD or TRAF2. Interacts with PRKN.

The protein resides in the cytoplasm. Inhibits the chaperone activity of HSP70/HSC70 by promoting substrate release. Prevents constitutive TNFRSF1A signaling. Negative regulator of PRKN translocation to damaged mitochondria. The sequence is that of BAG family molecular chaperone regulator 4 (Bag4) from Mus musculus (Mouse).